A 23-amino-acid chain; its full sequence is Endochitinase B (23 aa).

The protein belongs to the glycosyl hydrolase 19 family. Chitinase class I subfamily.

It catalyses the reaction Random endo-hydrolysis of N-acetyl-beta-D-glucosaminide (1-&gt;4)-beta-linkages in chitin and chitodextrins.. Functionally, defense against chitin-containing fungal pathogens. The protein is Endochitinase B of Pisum sativum (Garden pea).